Consider the following 397-residue polypeptide: Gamma tubulin complex adapter mto2 (397 aa).

A compositionally biased stretch (basic and acidic residues) spans 1–13 (MSEHNYQSDREVA). Disordered stretches follow at residues 1 to 44 (MSEH…WRAG), 269 to 298 (YTSS…PFPS), and 346 to 397 (RSDP…TPSP). Polar residues-rich tracts occupy residues 22 to 37 (ASAN…STPR), 269 to 281 (YTSS…QRMA), 352 to 369 (RHVS…SPTS), and 382 to 397 (SPAS…TPSP). Residues serine 366 and serine 396 each carry the phosphoserine modification.

In terms of assembly, interacts with mto1; the interaction is direct and required for efficient binding to the gamma-tubulin complex. Interacts with gamma tubulin complex subunits alp4, alp6 and gtb1.

Its subcellular location is the cytoplasm. It is found in the cytoskeleton. The protein localises to the microtubule organizing center. It localises to the spindle pole body. Acts together with mto1 to promote nucleation of at least a subset of cytoplasmic microtubules, by recruiting the gamma-tubulin complex to the interphase microtubule organizing center (iMTOC) and to the equatorial MTOC (eMTOC) during anaphase. Does not appear to be required for cytoplasmic astral microtubule nucleation from the spindle pole body (SPB). Required to establish the eMTOC, and thereby to tether the cytokinetic actin ring. In Schizosaccharomyces pombe (strain 972 / ATCC 24843) (Fission yeast), this protein is Gamma tubulin complex adapter mto2.